The primary structure comprises 403 residues: Phosphoglycerate kinase (403 aa).

Substrate-binding positions include 21 to 23 (DFN), Arg-36, 59 to 62 (HLGR), Arg-119, and Arg-154. ATP is bound by residues Lys-207, Gly-299, Glu-330, and 357–360 (GGDA).

This sequence belongs to the phosphoglycerate kinase family. In terms of assembly, monomer.

The protein resides in the cytoplasm. It carries out the reaction (2R)-3-phosphoglycerate + ATP = (2R)-3-phospho-glyceroyl phosphate + ADP. Its pathway is carbohydrate degradation; glycolysis; pyruvate from D-glyceraldehyde 3-phosphate: step 2/5. This chain is Phosphoglycerate kinase, found in Chlamydia trachomatis serovar A (strain ATCC VR-571B / DSM 19440 / HAR-13).